The sequence spans 63 residues: Large ribosomal subunit protein bL35 (63 aa).

It belongs to the bacterial ribosomal protein bL35 family.

The polypeptide is Large ribosomal subunit protein bL35 (Campylobacter fetus subsp. fetus (strain 82-40)).